Reading from the N-terminus, the 105-residue chain is Met repressor (105 aa).

The protein belongs to the MetJ family. In terms of assembly, homodimer.

It is found in the cytoplasm. In terms of biological role, this regulatory protein, when combined with SAM (S-adenosylmethionine) represses the expression of the methionine regulon and of enzymes involved in SAM synthesis. The protein is Met repressor of Sodalis glossinidius (strain morsitans).